The chain runs to 293 residues: 4-hydroxybenzoate octaprenyltransferase (293 aa).

Helical transmembrane passes span 41–61 (FAAA…LGVI), 98–118 (TEAK…DLLL), 122–142 (TFLL…MKRF), 145–165 (LPQV…YGAV), 167–187 (ESLP…TVAY), 218–238 (IIAL…WISQ), 241–261 (WGYF…CWLT), and 272–292 (AFLN…VGIY).

It belongs to the UbiA prenyltransferase family. The cofactor is Mg(2+).

The protein localises to the cell inner membrane. It carries out the reaction all-trans-octaprenyl diphosphate + 4-hydroxybenzoate = 4-hydroxy-3-(all-trans-octaprenyl)benzoate + diphosphate. Its pathway is cofactor biosynthesis; ubiquinone biosynthesis. Its function is as follows. Catalyzes the prenylation of para-hydroxybenzoate (PHB) with an all-trans polyprenyl group. Mediates the second step in the final reaction sequence of ubiquinone-8 (UQ-8) biosynthesis, which is the condensation of the polyisoprenoid side chain with PHB, generating the first membrane-bound Q intermediate 3-octaprenyl-4-hydroxybenzoate. This chain is 4-hydroxybenzoate octaprenyltransferase, found in Actinobacillus pleuropneumoniae serotype 5b (strain L20).